A 154-amino-acid polypeptide reads, in one-letter code: Myoglobin (154 aa).

The region spanning Met1–Ala147 is the Globin domain. His96 is a heme b binding site.

The protein belongs to the globin family.

The protein localises to the cytoplasm. In Nippostrongylus brasiliensis (Rat hookworm), this protein is Myoglobin (GLBB).